A 570-amino-acid chain; its full sequence is MMQKLIAQIEKGKPFFEKLSRNIYLRAIRDGFISAMPVILFSSIFLLIAYVPNIFGFKWDKGMEAILMKPYNYTMGLVAFLVAGTTAKSLTDSFNRKLESTNQINFISTMQAAMCGFLFLASDPAKDGGFLSAFMGTKGLLTAFLSAFVTVIVYNFCVKRNITIKMPKEVPPNISQVFKDLIPFSAVIIILYALDLVIRNSFKSNVAEGILKLFEPLFTAADGWIGVTIIFGAFALFWFVGIHGPSIVEPAIAAITYANIEANFKLLQAGEHADKIITSGTQMFIVTFGGTGATLVVPFMFMWMTKSKRNKAIGRASVVPTFFGVNEPILFGAPLVLNPVFFIPFVLAPIVNVWIFKLFVEVLGMNSFSVNLPWTTPGPLGIIMGTGFGLWSFVLAITLIVVDIIIYYPFLKVYDSEILDEEEGRKESNSDLKEKVAANFDTKKADSILAASGVSDDAAKASNITEQTNVLVLCAGGGTSGLLANALNKAAEEYHVPVKAAAGGYGAHMDIMKEYQLIILAPQVASNYEDIKQDTDRLGIKLAKTQGAEYIKLTRDGQAALDFVQQQFEN.

A PTS EIIC type-3 domain is found at 9–410; that stretch reads IEKGKPFFEK…VVDIIIYYPF (402 aa). The next 9 helical transmembrane spans lie at 31 to 51, 65 to 85, 104 to 124, 133 to 153, 178 to 198, 223 to 243, 283 to 303, 340 to 360, and 382 to 402; these read GFIS…IAYV, AILM…VAGT, INFI…ASDP, AFMG…TVIV, FKDL…DLVI, GWIG…VGIH, MFIV…MFMW, VFFI…KLFV, and IIMG…LIVV. One can recognise a PTS EIIB type-3 domain in the interval 467–570; sequence QTNVLVLCAG…LDFVQQQFEN (104 aa). C474 serves as the catalytic Phosphocysteine intermediate; for EIIB activity. The residue at position 474 (C474) is a Phosphocysteine; by EIIA.

The protein resides in the cell membrane. The enzyme catalyses lactose(out) + N(pros)-phospho-L-histidyl-[protein] = lactose 6-phosphate(in) + L-histidyl-[protein]. The phosphoenolpyruvate-dependent sugar phosphotransferase system (sugar PTS), a major carbohydrate active transport system, catalyzes the phosphorylation of incoming sugar substrates concomitantly with their translocation across the cell membrane. The enzyme II LacEF PTS system is involved in lactose transport, but can also use galactose, isopropyl beta-thio-galactopyranoside and thiomethyl beta-D-galactopyranoside (TMG) as substrates. This is PTS system lactose-specific EIICB component from Staphylococcus aureus.